Here is a 1005-residue protein sequence, read N- to C-terminus: Vacuolar membrane protease (1005 aa).

Topologically, residues Met-1–Gln-14 are cytoplasmic. Residues Thr-15–Val-35 traverse the membrane as a helical segment. Residues Ser-36 to Lys-353 are Vacuolar-facing. N-linked (GlcNAc...) asparagine glycosylation occurs at Asn-107. Zn(2+) contacts are provided by His-152 and Asp-164. Catalysis depends on Glu-196, which acts as the Proton acceptor. Residue Glu-197 participates in Zn(2+) binding. Asn-213 carries N-linked (GlcNAc...) asparagine glycosylation. Zn(2+)-binding residues include Glu-222 and His-311. The chain crosses the membrane as a helical span at residues Pro-354–Leu-374. The Cytoplasmic segment spans residues Lys-375–Phe-448. A disordered region spans residues Gly-379–Ala-420. A compositionally biased stretch (polar residues) spans Ser-406 to Asp-419. A helical transmembrane segment spans residues Trp-449–Ile-469. Over Asn-470–Tyr-479 the chain is Vacuolar. Residues Phe-480 to Ala-500 traverse the membrane as a helical segment. At Phe-501–Thr-519 the chain is on the cytoplasmic side. The chain crosses the membrane as a helical span at residues Ile-520 to Gly-540. Residues Lys-541–Gln-543 are Vacuolar-facing. A helical transmembrane segment spans residues Val-544 to Gly-564. The Cytoplasmic portion of the chain corresponds to Thr-565 to Asp-644. The tract at residues Asp-577 to Lys-640 is disordered. Residues Ser-588–Asp-606 are compositionally biased toward low complexity. Residues Gly-645 to Val-665 traverse the membrane as a helical segment. Residues Gly-666–Ala-686 are Vacuolar-facing. The N-linked (GlcNAc...) asparagine glycan is linked to Asn-677. A helical transmembrane segment spans residues Trp-687 to Phe-707. At Ser-708–Arg-713 the chain is on the cytoplasmic side. Residues Gly-714–Phe-734 traverse the membrane as a helical segment. The Vacuolar portion of the chain corresponds to Pro-735 to Val-1005. 2 N-linked (GlcNAc...) asparagine glycosylation sites follow: Asn-761 and Asn-961.

The protein belongs to the peptidase M28 family. It depends on Zn(2+) as a cofactor.

It localises to the vacuole membrane. Functionally, may be involved in vacuolar sorting and osmoregulation. This chain is Vacuolar membrane protease, found in Coprinopsis cinerea (strain Okayama-7 / 130 / ATCC MYA-4618 / FGSC 9003) (Inky cap fungus).